An 892-amino-acid chain; its full sequence is Transmembrane channel-like protein 2-B (892 aa).

The interval 29–125 (GINQNLRREE…DESMSEGEMA (97 aa)) is disordered. Composition is skewed to basic residues over residues 48–58 (RRAKKRRMNRR) and 66–77 (RSKKMRMRVRKN). Residues 103 to 112 (PSSCSSSSDN) show a composition bias toward low complexity. 9 helical membrane passes run 235-255 (LVLFGFMFGLVVIPELLMGIP), 275-295 (FSVLFEFGGYCKYSILFYGFY), 308-328 (LPLSYLLVGVGIFGYSLMVVI), 403-423 (LANVLILCCLAGSGYLIYAVV), 444-464 (EVEIVMSLLGLVCPPLFEAIA), 482-502 (IFALFLGNLYTFLFALFDEVN), 616-636 (LIFNQGMIWMGAFYAPGLVGI), 671-691 (FYMGLLLLVLFLSLMPVIYSI), and 736-756 (GLIISVVLLMVWLAIYYLNAV). Positions 772–785 (QMQRDEEKNRRNNK) are enriched in basic and acidic residues. Disordered regions lie at residues 772-791 (QMQRDEEKNRRNNKDSTNQV) and 796-892 (EDLL…PPRR). The span at 862-878 (PRQPGPLPGNPRGPPPG) shows a compositional bias: pro residues.

The protein belongs to the TMC family. In terms of tissue distribution, in adults, expression is restricted to the hair cells of inner ear and lateral line organ. Expressed at higher levels in the larval lateral-line neuromasts than in the larval inner ear.

The protein resides in the membrane. Its function is as follows. Probable component of the mechanotransducer (MET) non-selective cation channel. This chain is Transmembrane channel-like protein 2-B, found in Danio rerio (Zebrafish).